Reading from the N-terminus, the 397-residue chain is MGKAKFERTKPHVNIGTIGHVDHGKTTLTAAISKVLADKYPSATNVQRDFASIDSAPEERQRGITINISHVEYETPKRHYAHVDAPGHADYIKNMITGAAQMDGAILVVAATDGPMAQTREHVLLAKQVGVPYLLVALNKSDMVDDEEILELVELEVRELLSSQDFDGDNAPVVQVSGLKALEGDEKWVEQIVKLMDAVDESIPEPVRDKDKPFLMPVEDVFTITGRGTVVTGRAERGTLAINSDVEIVGIRPTVKTTVTGIEMFHKQLDEAWAGENCGLLLRGTKREDVERGQVIVKPGSVTPHTDFEGTAYILSKEEGGRHNPFYANYRPQFYFRTTDVTGVITLPEGTEMVMPGDTTDMNVALIQPIAMEEGLGFAIREGGRTVGAGTVTKIVK.

The tr-type G domain occupies 10–207; it reads KPHVNIGTIG…AVDESIPEPV (198 aa). The segment at 19–26 is G1; the sequence is GHVDHGKT. 19–26 provides a ligand contact to GTP; the sequence is GHVDHGKT. Threonine 26 contacts Mg(2+). Residues 63-67 form a G2 region; the sequence is GITIN. Positions 84 to 87 are G3; sequence DAPG. Residues 84-88 and 139-142 contribute to the GTP site; these read DAPGH and NKSD. The G4 stretch occupies residues 139-142; the sequence is NKSD. Residues 177–179 form a G5 region; that stretch reads SGL.

Belongs to the TRAFAC class translation factor GTPase superfamily. Classic translation factor GTPase family. EF-Tu/EF-1A subfamily. Monomer.

The protein localises to the cytoplasm. The catalysed reaction is GTP + H2O = GDP + phosphate + H(+). Functionally, GTP hydrolase that promotes the GTP-dependent binding of aminoacyl-tRNA to the A-site of ribosomes during protein biosynthesis. This chain is Elongation factor Tu, found in Clavibacter michiganensis subsp. michiganensis (strain NCPPB 382).